Reading from the N-terminus, the 81-residue chain is MEARTFWLLVVAVLALGSSSSTGQYVGLSANQCAVPAKDRVDCGYPEVTPEQCNNRGCCFDSSIHGVPWCFKPLQEAECTF.

An N-terminal signal peptide occupies residues Met1–Gly23. Residues Asn31–Leu74 enclose the P-type domain. Intrachain disulfides connect Cys33-Cys59, Cys43-Cys58, and Cys53-Cys70.

Monomer. Homodimer; disulfide-linked.

It localises to the secreted. It is found in the extracellular space. The protein resides in the extracellular matrix. The protein localises to the cytoplasm. Functionally, involved in the maintenance and repair of the intestinal mucosa. Promotes the mobility of epithelial cells in healing processes (motogen). The sequence is that of Trefoil factor 3 (TFF3) from Bos taurus (Bovine).